Consider the following 417-residue polypeptide: Zinc-finger homeodomain protein 4 (417 aa).

Positions 1-12 (MVSILQLQTRTE) are enriched in polar residues. Disordered stretches follow at residues 1–22 (MVSILQLQTRTEASPASSASAA) and 31–50 (RQQQEQEGEEEEEEFEFQER). Residues 13–22 (ASPASSASAA) are compositionally biased toward low complexity. The segment covering 36-46 (QEGEEEEEEFE) has biased composition (acidic residues). A ZF-HD dimerization-type; degenerate zinc finger spans residues 145-194 (YRECLKNHAAAIGGNATDGCGEFMPSGEEGSLEALKCSACGCHRNFHRKE). Disordered stretches follow at residues 281–309 (DEMDVSGGGGGVGRGGGSSSSSKKRFRTK) and 361–417 (NLAK…LKLE). The span at 286-298 (SGGGGGVGRGGGS) shows a compositional bias: gly residues. The homeobox DNA-binding region spans 303 to 366 (KKRFRTKFTA…NNKHNLAKKP (64 aa)). A compositionally biased stretch (pro residues) spans 368–417 (PSSPPPPPQIPPMSMPPSPPPPQIPPMSMPPSPPPMPMPMPPSPPQLKLE).

As to quaternary structure, homo- and heterodimer with other ZFHD proteins.

It localises to the nucleus. Functionally, putative transcription factor. The protein is Zinc-finger homeodomain protein 4 (ZHD4) of Oryza sativa subsp. japonica (Rice).